A 288-amino-acid polypeptide reads, in one-letter code: Probable HTH-type transcriptional regulator STM3175 (288 aa).

One can recognise an HTH araC/xylS-type domain in the interval 14 to 113 (RRVCDHIERH…GQSPRRFRQS (100 aa)). DNA-binding regions (H-T-H motif) lie at residues 31-52 (EALS…TTWS) and 80-103 (VIDI…KTAF). The segment at 111–288 (RQSPDWLAWH…LLTDIYLPLR (178 aa)) is putative effector binding domain; binds the peptide antibiotic albicidin.

Homodimer.

In terms of biological role, probable transcription factor. The protein is Probable HTH-type transcriptional regulator STM3175 of Salmonella typhimurium (strain LT2 / SGSC1412 / ATCC 700720).